A 179-amino-acid chain; its full sequence is Fucolectin-4 (179 aa).

Positions 1 to 23 (MEVKTIMLLFQILAISTLKQGSA) are cleaved as a signal peptide. Residues 31–179 (EENVALRGRA…VEVNALLPVN (149 aa)) are F5/8 type C-like. Ca(2+) contacts are provided by Asn-58, Asp-61, Asn-63, and Ser-72. 3 disulfide bridges follow: Cys-73–Cys-168, Cys-104–Cys-105, and Cys-130–Cys-146. 2 residues coordinate alpha-L-fucose: His-75 and Arg-101. Positions 101–103 (RGD) match the Cell attachment site motif. An alpha-L-fucose-binding site is contributed by Arg-108. The Ca(2+) site is built by Cys-168 and Glu-169.

This sequence belongs to the fucolectin family. In terms of assembly, homotrimer. Gill mucous cells.

The protein localises to the secreted. In terms of biological role, acts as a defensive agent. Recognizes blood group fucosylated oligosaccharides including A, B, H and Lewis B-type antigens. Does not recognize Lewis A antigen and has low affinity for monovalent haptens. In Anguilla japonica (Japanese eel), this protein is Fucolectin-4.